Here is a 249-residue protein sequence, read N- to C-terminus: uncharacterized protein (249 aa).

The protein belongs to the ycf73 family.

It localises to the plastid. The protein localises to the chloroplast. This is an uncharacterized protein from Oryza sativa (Rice).